The following is a 349-amino-acid chain: Large ribosomal subunit protein uL2mz, N-terminal part (349 aa).

This sequence belongs to the universal ribosomal protein uL2 family. Component of the mitochondrial ribosome large subunit.

It is found in the mitochondrion. The protein is Large ribosomal subunit protein uL2mz, N-terminal part of Arabidopsis thaliana (Mouse-ear cress).